The primary structure comprises 291 residues: Putative phosphatase MG263 (291 aa).

D11 (nucleophile) is an active-site residue. D11 is a binding site for Mg(2+). L12 lines the phosphate pocket. Residue D13 participates in Mg(2+) binding. Residues 60-61 (TG) and K217 contribute to the phosphate site. D241 provides a ligand contact to Mg(2+). Residue N244 participates in phosphate binding.

Belongs to the HAD-like hydrolase superfamily. Cof family. Mg(2+) serves as cofactor.

This chain is Putative phosphatase MG263, found in Mycoplasma genitalium (strain ATCC 33530 / DSM 19775 / NCTC 10195 / G37) (Mycoplasmoides genitalium).